A 491-amino-acid polypeptide reads, in one-letter code: NADPH:adrenodoxin oxidoreductase, mitochondrial (491 aa).

Residues 1 to 32 (MASRCWRWWGWSAWPRTRLPPAGSTPSFCHHF) constitute a mitochondrion transit peptide. Residues alanine 49, glutamate 69, leucine 77, and valine 113 each contribute to the FAD site. Residues 184-187 (QGNV), 228-229 (RR), and glutamate 240 each bind NADP(+). Phosphoserine is present on residues serine 310 and serine 317. FAD contacts are provided by residues tryptophan 398 and 405-407 (GVI). Position 405 (glycine 405) interacts with NADP(+).

This sequence belongs to the ferredoxin--NADP reductase type 1 family. Monomer. Interacts directly with FDX1. FAD serves as cofactor.

The protein resides in the mitochondrion. The protein localises to the mitochondrion inner membrane. The enzyme catalyses 2 reduced [adrenodoxin] + NADP(+) + H(+) = 2 oxidized [adrenodoxin] + NADPH. The catalysed reaction is 2 reduced [2Fe-2S]-[ferredoxin] + NADP(+) + H(+) = 2 oxidized [2Fe-2S]-[ferredoxin] + NADPH. It participates in steroid metabolism; cholesterol metabolism. Functionally, serves as the first electron transfer protein in all the mitochondrial P450 systems including cholesterol side chain cleavage in all steroidogenic tissues, steroid 11-beta hydroxylation in the adrenal cortex, 25-OH-vitamin D3-24 hydroxylation in the kidney, and sterol C-27 hydroxylation in the liver. Also acts as a ferredoxin--NADP(+) reductase essential for coenzyme Q biosynthesis: together with FDX2, transfers the electrons required for the hydroxylation reaction performed by COQ6. The polypeptide is NADPH:adrenodoxin oxidoreductase, mitochondrial (Homo sapiens (Human)).